A 289-amino-acid chain; its full sequence is ATP synthase gamma chain (289 aa).

This sequence belongs to the ATPase gamma chain family. In terms of assembly, F-type ATPases have 2 components, CF(1) - the catalytic core - and CF(0) - the membrane proton channel. CF(1) has five subunits: alpha(3), beta(3), gamma(1), delta(1), epsilon(1). CF(0) has three main subunits: a, b and c.

It is found in the cell inner membrane. Functionally, produces ATP from ADP in the presence of a proton gradient across the membrane. The gamma chain is believed to be important in regulating ATPase activity and the flow of protons through the CF(0) complex. The protein is ATP synthase gamma chain of Coxiella burnetii (strain CbuG_Q212) (Coxiella burnetii (strain Q212)).